The sequence spans 374 residues: Eukaryotic translation initiation factor 3 subunit M (374 aa).

S2 carries the post-translational modification N-acetylserine. Residues S2 and S152 each carry the phosphoserine modification. One can recognise a PCI domain in the interval A180–H339. K254 is modified (N6-acetyllysine). S367 is modified (phosphoserine).

Belongs to the eIF-3 subunit M family. As to quaternary structure, component of the eukaryotic translation initiation factor 3 (eIF-3) complex, which is composed of 13 subunits: EIF3A, EIF3B, EIF3C, EIF3D, EIF3E, EIF3F, EIF3G, EIF3H, EIF3I, EIF3J, EIF3K, EIF3L and EIF3M. The eIF-3 complex appears to include 3 stable modules: module A is composed of EIF3A, EIF3B, EIF3G and EIF3I; module B is composed of EIF3F, EIF3H, and EIF3M; and module C is composed of EIF3C, EIF3D, EIF3E, EIF3K and EIF3L. EIF3C of module C binds EIF3B of module A and EIF3H of module B, thereby linking the three modules. EIF3J is a labile subunit that binds to the eIF-3 complex via EIF3B. The eIF-3 complex interacts with RPS6KB1 under conditions of nutrient depletion. Mitogenic stimulation leads to binding and activation of a complex composed of MTOR and RPTOR, leading to phosphorylation and release of RPS6KB1 and binding of EIF4B to eIF-3.

Its subcellular location is the cytoplasm. Functionally, component of the eukaryotic translation initiation factor 3 (eIF-3) complex, which is required for several steps in the initiation of protein synthesis. The eIF-3 complex associates with the 40S ribosome and facilitates the recruitment of eIF-1, eIF-1A, eIF-2:GTP:methionyl-tRNAi and eIF-5 to form the 43S pre-initiation complex (43S PIC). The eIF-3 complex stimulates mRNA recruitment to the 43S PIC and scanning of the mRNA for AUG recognition. The eIF-3 complex is also required for disassembly and recycling of post-termination ribosomal complexes and subsequently prevents premature joining of the 40S and 60S ribosomal subunits prior to initiation. The eIF-3 complex specifically targets and initiates translation of a subset of mRNAs involved in cell proliferation, including cell cycling, differentiation and apoptosis, and uses different modes of RNA stem-loop binding to exert either translational activation or repression. The chain is Eukaryotic translation initiation factor 3 subunit M from Pongo abelii (Sumatran orangutan).